The following is a 198-amino-acid chain: DnaJ homolog subfamily C member 5 (198 aa).

4 positions are modified to phosphoserine: serine 8, serine 10, serine 12, and serine 15. Positions 13–82 (GESLYHVLGL…RNIYDKYGSL (70 aa)) constitute a J domain. A Phosphotyrosine modification is found at tyrosine 17. N6-acetyllysine is present on lysine 56. Phosphoserine is present on serine 151.

In terms of assembly, oligomers. Homodimer. Interacts with the chaperone complex consisting of HSC70 and SGTA. Interacts with ZDHHC13 (via ANK repeats). Interacts with ZDHHC17 (via ANK repeats). Interacts with SYT1, SYT5 and SYT7, and with SYT9, forming a complex with SNAP25. In terms of processing, ser-10 phosphorylation induces an order-to-disorder transition triggering the interaction with Lys-58. This conformational switch modulates DNAJC5's cellular functions by reducing binding to syntaxin and synaptogamin without altering HSC70 interactions. Post-translationally, palmitoylated. Could be palmitoylated by DHHC3, DHHC7, DHHC15 and DHHC17. Palmitoylation occurs probably in the cysteine-rich domain and regulates DNAJC5 membrane attachment. Expressed in pancreas, kidney, skeletal muscle, liver, lung, placenta, brain and heart.

It is found in the cytoplasm. The protein localises to the cytosol. The protein resides in the membrane. Its subcellular location is the cytoplasmic vesicle. It localises to the secretory vesicle. It is found in the chromaffin granule membrane. The protein localises to the melanosome. The protein resides in the cell membrane. Its function is as follows. Acts as a general chaperone in regulated exocytosis. Acts as a co-chaperone for the SNARE protein SNAP-25. Involved in the calcium-mediated control of a late stage of exocytosis. May have an important role in presynaptic function. May be involved in calcium-dependent neurotransmitter release at nerve endings. This chain is DnaJ homolog subfamily C member 5, found in Homo sapiens (Human).